The chain runs to 513 residues: Ribonuclease Y (513 aa).

The helical transmembrane segment at 6–26 threads the bilayer; the sequence is YIIIAVVIIIICVILGLYVVD. Residues 35–59 are disordered; it reads EASKEARRLKEEAERDAEAKKKEAI. In terms of domain architecture, KH spans 203-288; sequence TVHVVNLPND…EMVEKAKKEV (86 aa). The region spanning 329–422 is the HD domain; sequence VLKHSIEVSH…VQAADAISAA (94 aa).

Belongs to the RNase Y family.

Its subcellular location is the cell membrane. Its function is as follows. Endoribonuclease that initiates mRNA decay. This Clostridium botulinum (strain Okra / Type B1) protein is Ribonuclease Y.